The chain runs to 62 residues: Temporin-La (62 aa).

An N-terminal signal peptide occupies residues 1–22 (MFPLKKSLLLLFFLGTINLSFC). The propeptide occupies 23-47 (EEERDVDQDERRDDPGERNVQVEKR). L60 carries the post-translational modification Leucine amide.

Belongs to the frog skin active peptide (FSAP) family. Temporin subfamily. In terms of tissue distribution, expressed by the skin glands.

It localises to the secreted. The protein resides in the target cell membrane. In terms of biological role, antimicrobial peptide with amphipathic alpha-helical structure that acts against both Gram-positive and Gram-negative bacteria and the fungus Candida albicans. Is active against S.aureus ATCC 25923 (MIC=2.5 ug/ml), S.suis 2 CVCC 606 (MIC=15.6 ug/ml), Salmonella ATCC 20020 (MIC=15.6 ug/ml), P.aeruginosa ATCC 227853 (MIC=60 ug/ml), and C.albicans ATCC10231 (MIC=31.25 ug/ml). Is not active against B.subtilis ADB403, E.coli ATCC 25922, and K.pneumoniae ATCC 700603. Also shows a strong antitumor activity, but no hemolytic activity. This chain is Temporin-La, found in Aquarana catesbeiana (American bullfrog).